A 307-amino-acid polypeptide reads, in one-letter code: Shikimate kinase 2, chloroplastic (307 aa).

A chloroplast-targeting transit peptide spans 1–60 (MEARAGLAMQSRAAVGVGAGPGVGRRGRAVIRVGKRPTAASLRVGGPAGPAAAKPLAPLY). Residue 101–108 (GMMGSGKS) participates in ATP binding. S108 provides a ligand contact to Mg(2+). Substrate contacts are provided by D126, R151, and G173. R212 contacts ATP. The interval 285-307 (HSTSSGPVGDLIVDSQNRRTKAL) is disordered.

It belongs to the shikimate kinase family. It depends on Mg(2+) as a cofactor. Expressed in panicles.

Its subcellular location is the plastid. The protein localises to the chloroplast. The catalysed reaction is shikimate + ATP = 3-phosphoshikimate + ADP + H(+). It functions in the pathway metabolic intermediate biosynthesis; chorismate biosynthesis; chorismate from D-erythrose 4-phosphate and phosphoenolpyruvate: step 5/7. Functionally, catalyzes the specific phosphorylation of the 3-hydroxyl group of shikimic acid using ATP as a cosubstrate. The sequence is that of Shikimate kinase 2, chloroplastic (SK2) from Oryza sativa subsp. japonica (Rice).